Reading from the N-terminus, the 363-residue chain is 3-isopropylmalate dehydrogenase (363 aa).

78 to 91 (XXXXXXXXXXXXXX) lines the NAD(+) pocket. Residues arginine 99, arginine 109, arginine 138, and aspartate 227 each contribute to the substrate site. Residues aspartate 227, aspartate 251, and aspartate 255 each contribute to the Mg(2+) site. Position 285–297 (285–297 (GSAPDIEGKNIAN)) interacts with NAD(+).

It belongs to the isocitrate and isopropylmalate dehydrogenases family. LeuB type 1 subfamily. As to quaternary structure, homodimer. Requires Mg(2+) as cofactor. Mn(2+) serves as cofactor.

Its subcellular location is the cytoplasm. It carries out the reaction (2R,3S)-3-isopropylmalate + NAD(+) = 4-methyl-2-oxopentanoate + CO2 + NADH. It participates in amino-acid biosynthesis; L-leucine biosynthesis; L-leucine from 3-methyl-2-oxobutanoate: step 3/4. Its function is as follows. Catalyzes the oxidation of 3-carboxy-2-hydroxy-4-methylpentanoate (3-isopropylmalate) to 3-carboxy-4-methyl-2-oxopentanoate. The product decarboxylates to 4-methyl-2 oxopentanoate. In Buchnera aphidicola subsp. Uroleucon solidaginis, this protein is 3-isopropylmalate dehydrogenase.